The chain runs to 182 residues: Small ribosomal subunit protein uS4c (182 aa).

Positions 82–143 (MRLDNILFRL…KERSKVLIQN (62 aa)) constitute an S4 RNA-binding domain.

Belongs to the universal ribosomal protein uS4 family. Part of the 30S ribosomal subunit. Contacts protein S5. The interaction surface between S4 and S5 is involved in control of translational fidelity.

It localises to the plastid. It is found in the chloroplast. Its function is as follows. One of the primary rRNA binding proteins, it binds directly to 16S rRNA where it nucleates assembly of the body of the 30S subunit. Functionally, with S5 and S12 plays an important role in translational accuracy. The chain is Small ribosomal subunit protein uS4c (rps4) from Neomarica sp. (strain Lejeune 1997).